The following is a 151-amino-acid chain: UPF0735 ACT domain-containing protein SH1278 (151 aa).

An ACT domain is found at 74–149 (TLILYVNDIV…HVSKVELISM (76 aa)).

It belongs to the UPF0735 family.

The polypeptide is UPF0735 ACT domain-containing protein SH1278 (Staphylococcus haemolyticus (strain JCSC1435)).